The sequence spans 83 residues: NAD(P)H-quinone oxidoreductase subunit L (83 aa).

2 consecutive transmembrane segments (helical) span residues 15–35 (LFVLLAYGAVLGTYLIAVPLA) and 53–73 (LGVYGLVFLFFPGMIVFAPFI).

This sequence belongs to the complex I NdhL subunit family. NDH-1 can be composed of about 15 different subunits; different subcomplexes with different compositions have been identified which probably have different functions.

Its subcellular location is the cellular thylakoid membrane. The enzyme catalyses a plastoquinone + NADH + (n+1) H(+)(in) = a plastoquinol + NAD(+) + n H(+)(out). It catalyses the reaction a plastoquinone + NADPH + (n+1) H(+)(in) = a plastoquinol + NADP(+) + n H(+)(out). NDH-1 shuttles electrons from an unknown electron donor, via FMN and iron-sulfur (Fe-S) centers, to quinones in the respiratory and/or the photosynthetic chain. The immediate electron acceptor for the enzyme in this species is believed to be plastoquinone. Couples the redox reaction to proton translocation, and thus conserves the redox energy in a proton gradient. Cyanobacterial NDH-1 also plays a role in inorganic carbon-concentration. The sequence is that of NAD(P)H-quinone oxidoreductase subunit L from Synechococcus sp. (strain CC9902).